The following is a 45-amino-acid chain: DNA replication protein repEB (45 aa).

In terms of biological role, involved in T4 DNA replication. Important for the priming of leading strand DNA synthesis at oriE. Binds to ssDNA. The polypeptide is DNA replication protein repEB (repEB) (Enterobacteria phage T4 (Bacteriophage T4)).